The sequence spans 77 residues: Conotoxin ArMKLT2-0251 (77 aa).

A signal peptide spans 1–22 (MKLTCVLIVAVLILTACQLIAA). A propeptide spanning residues 23 to 46 (DDSRDLKRFSRRKMRDGMLNTKNM) is cleaved from the precursor. A Pyrrolidone carboxylic acid modification is found at Gln-49. Intrachain disulfides connect Cys-50–Cys-65, Cys-57–Cys-68, and Cys-64–Cys-73.

It belongs to the conotoxin O1 superfamily. In terms of tissue distribution, expressed by the venom duct.

It localises to the secreted. This chain is Conotoxin ArMKLT2-0251, found in Conus arenatus (Sand-dusted cone).